The following is a 2387-amino-acid chain: MPSAQHSVGDVPIAVVGLSCRFPGDASTPSKFWDMLKNGKDAYSPTSTRWNSDAFYHPGDGRLNSLPTKGGHFLKEDPYVFDAAFFNITAAEAIALDPKQRIAMEVTYEAFENAGMSLQQISGSQTACYIGSGPSDYRGAVERDFLHNPKYHLLGTGDEMISNRISHFLDIHGPSATVQTACSSSLMATHLACQSLRSGESEMAITGGISLMLTPDFTTHLNNLTFLNPEGLSKAFDESAGGYGRGEGCGIIILKRLADAIQDGDDIRAVIRGTGANSDGFTQGVTMPSFEAQAALIRQVYSSNGLDYSTQYVEAHGTGTKAGDPIETRAIYSTIGKGSPKPRKLFVGSVKPNIGHLESAAGVSGIIKGILSMEHNLIPPNLHFTKANPAIPFDEWNMAVPTKLTPWPVAATKRMSVSGFGMGGTNGHVVLESFDSTRSTNGSGYSGGFSTFEKTRTKKRLFVFSSHDQAGFKRNANALAEHLDTVGSVASSSDFMANLAHTLSGARSSLSWRATCIAENKIELRDYLTTKPGDGASRDATNATRAPRIGFVFTGQGAQWARMGVEMLDRPVFRDSVAQSTHYLQAMGCVWDPVAELKKTQADSRLSQPEISQPICSVLQIALVDELRSWGVTPSKVVGHSSGEIAAAYSIGALSHRDAIAAAYFRGVATVRLRADAPDLKGGMMAVGCSRDEAEELIEQSKLDGTAAVACVNSPSSVTLSGDVDTLEQLRAICDEHKVFVRRLKVEMAYHSRHMNRVSGTYAEFIADLQPIPREYNENEDDDSIQTMLSSVTGQEVAPELLGPYYWVRNLVSPVLFSDAVKEMVAPDEAEGDNTVDLLIEIGPHGALGGPVEQILGHHGVKHITYKSMLTRGRNALETSLELASELFLKGVPIDISQVNSDLNPRRLTDLPPYQWNHSKVFRHETRIQRELVMRQFPSKSIIGAQVPMMDESQHVWRNFLRLSDEPWIRGHKVGSTVLFPAAGLIGMALEAAQQLVEPSKTARSLRLRDISFFAAMALSEDVPTEVIMHLRPHLLATSGSTPAAWWEFTISSCAGIDNLRDNCRGLITIDYAETTSEQMASEDASLEASRIAHYHRVREESSYTYSKEDFYSQFEKIAWNYGEAFRGVEKVYLGDGQATYDVKLVDIGETASKGQLDRPFLIHAGALDSILQGCLGSTYRNGRFDMDKPVLPTFIGQMEISLDIPGDAGYVLPAVCESKRHGFKELSSNIYAFDSAVSKVNLSVVDYRVSELENDSGEQDSQQLEVDPAEITSEVRWNYALEVLEPEEIKKVVLAVAAEDRVVELIRLYLHNNPAATVIELVPDYEALERATMSLLPPGTILPSHIKYAVAATGSKSENQVDIENVIGTPFDLGDLDDTLPTDIAAADLLVIPQSVNNHKDLGVLLTRLTSFGKPDASLVLAVNSSVNVSNSMLESKGFRRVFDLENSVALYKSRQSGHTNGHTNGHTNGTSTRSELFIIEPLATSSRINSFSGALQVTLREHGYPVFVTNWTEISARPAADLEGNTFISLLELEQPLLDALSEPDFYSVRKLLLNSDRLLWITAGDNPSMGVVDGIRRTMRSEVAGLKFQVLHLSSLDTALQCGPALAGRIMTTDTKDDEFQERDGMLQVARIFNSPEGNEGVRRCLEDSVRVERLGEQERALRLTIMKPGLMDTLTFIEDDRMTGPLGATEIEVDVKATGVNFKDIMAAMGLVEVSLIGQEASGIVTATGSTAASRFKPGDRVTLLWEGMHVTKLRIDHRLAVHIPDSMSFEEAAALPMVHTTAYHALVNVAKLRPGQSVLIHAAAGGVGQAALQLATHLGLVAYVTVGSEDKRRLLMEKYNVPEAHIFHSRDTSFAKAIKRVTGGRGVDCVLNSLSGELLRVSWTCLAPFGTFVEIGLRDITNNMRLDMRPFSRSTTFAFINIANFFDPEGLDALGQILSDAFALVHKGVLGTAYPLTVYPVSELETAFRTMQQGKHRGKLVLSFGDNAQAPVLCKARDSLRLSPKSTYLFIGGLGGLGRSLAREFVACGARHIAFISRSGDSSAEAKATVQALTTLGANVKAYRADVSEEAAFLSAMQQCATDLPPIAGVVQMAMLLRDTLFEKISYTDWTQPMRPKIQGTLNLHNYFSATRPLDFFVICSSISGIFGYPGQTQYAAANTFQDALARHRRNQGLKGVAVDLGIMRDVGILAEQGTTGKLADWEAILGIREKPFHALMKSVINSEWKGAVPPPAQLCTGLGTADIMARFGLERPEHFSDPRFGPLNVLSIESSSSLSTDQDTASSPSTRLAAATTLDEAVVIITDALVHKMAEILQMPLSEVDPGRPMYRYGVDSLVALEVRNWITRELQANMALLEILAAEPMRVFAGKIAEKSKLVAGRKG.

Residues 10-433 (DVPIAVVGLS…GTNGHVVLES (424 aa)) enclose the Ketosynthase family 3 (KS3) domain. Active-site for beta-ketoacyl synthase activity residues include cysteine 182, histidine 316, and histidine 356. The tract at residues 551-891 (FVFTGQGAQW…ELASELFLKG (341 aa)) is malonyl-CoA:ACP transacylase (MAT) domain. The active-site For malonyltransferase activity is the serine 641. Residues 940–1075 (KSIIGAQVPM…GLITIDYAET (136 aa)) form an N-terminal hotdog fold region. The 320-residue stretch at 940-1259 (KSIIGAQVPM…VSELENDSGE (320 aa)) folds into the PKS/mFAS DH domain. The interval 942–1256 (IIGAQVPMMD…DYRVSELEND (315 aa)) is dehydratase (DH) domain. The active-site Proton acceptor; for dehydratase activity is the histidine 972. Positions 1103-1259 (SYTYSKEDFY…VSELENDSGE (157 aa)) are C-terminal hotdog fold. Aspartate 1169 serves as the catalytic Proton donor; for dehydratase activity. The enoylreductase (ER) domain stretch occupies residues 1673-1987 (GLMDTLTFIE…QGKHRGKLVL (315 aa)). The tract at residues 2011–2191 (STYLFIGGLG…VAVDLGIMRD (181 aa)) is catalytic ketoreductase (KRc) domain. Positions 2302–2379 (EAVVIITDAL…VFAGKIAEKS (78 aa)) constitute a Carrier domain. O-(pantetheine 4'-phosphoryl)serine is present on serine 2339.

The protein operates within mycotoxin biosynthesis. Its function is as follows. Highly reducing polyketide synthase; part of the gene cluster that mediates the biosynthesis of 10,11-dehydrocurvularin, a prevalent fungal phytotoxin with heat shock response and immune-modulatory activities. The highly reducing polyketide synthase curS1 is responsible for biosynthesis up to the tetraketide stage. The non-reducing polyketide synthase curS2 then conducts four additional chain extension cycles, producing the unreduced part of the nascent octaketide from C-1 to C-8 in 10,11-dehydrocurvularin. This Aspergillus terreus protein is Highly reducing polyketide synthase curS1.